Here is a 294-residue protein sequence, read N- to C-terminus: UDP-3-O-acyl-N-acetylglucosamine deacetylase (294 aa).

Positions 75, 232, and 236 each coordinate Zn(2+). Histidine 259 functions as the Proton donor in the catalytic mechanism.

Belongs to the LpxC family. Requires Zn(2+) as cofactor.

It catalyses the reaction a UDP-3-O-[(3R)-3-hydroxyacyl]-N-acetyl-alpha-D-glucosamine + H2O = a UDP-3-O-[(3R)-3-hydroxyacyl]-alpha-D-glucosamine + acetate. The protein operates within glycolipid biosynthesis; lipid IV(A) biosynthesis; lipid IV(A) from (3R)-3-hydroxytetradecanoyl-[acyl-carrier-protein] and UDP-N-acetyl-alpha-D-glucosamine: step 2/6. Its function is as follows. Catalyzes the hydrolysis of UDP-3-O-myristoyl-N-acetylglucosamine to form UDP-3-O-myristoylglucosamine and acetate, the committed step in lipid A biosynthesis. The chain is UDP-3-O-acyl-N-acetylglucosamine deacetylase from Sulfurovum sp. (strain NBC37-1).